The chain runs to 490 residues: Hexokinase (490 aa).

Residues glutamine 21–alanine 466 enclose the Hexokinase domain. The tract at residues aspartate 75 to isoleucine 209 is hexokinase small subdomain. Residues asparagine 210 to aspartate 455 form a hexokinase large subdomain region.

It belongs to the hexokinase family. In terms of assembly, monomer.

It catalyses the reaction a D-hexose + ATP = a D-hexose 6-phosphate + ADP + H(+). The enzyme catalyses D-fructose + ATP = D-fructose 6-phosphate + ADP + H(+). The catalysed reaction is D-glucose + ATP = D-glucose 6-phosphate + ADP + H(+). Its pathway is carbohydrate metabolism; hexose metabolism. The protein operates within carbohydrate degradation; glycolysis; D-glyceraldehyde 3-phosphate and glycerone phosphate from D-glucose: step 1/4. In terms of biological role, catalyzes the phosphorylation of hexose, such as D-glucose and D-fructose, to hexose 6-phosphate (D-glucose 6-phosphate and D-fructose 6-phosphate, respectively). Mediates the initial step of glycolysis by catalyzing phosphorylation of D-glucose to D-glucose 6-phosphate. This is Hexokinase (hxkA) from Emericella nidulans (strain FGSC A4 / ATCC 38163 / CBS 112.46 / NRRL 194 / M139) (Aspergillus nidulans).